A 314-amino-acid chain; its full sequence is MTRTRSGSLAAGGLNWASLPLKLFAGGNAKFWHPADIDFTRDRADWEKLSDDERDYATRLCTQFIAGEEAVTEDIQPFMSAMRAEGRLADEMYLTQFAFEEAKHTQVFRMWLDAVGISEDLHRYLDDLPAYRQIFYAELPECLNALSADPSPAAQVRASVTYNHIVEGMLALTGYYAWHKICVERAILPGMQELVRRIGDDERRHMAWGTFTCRRHVAADDANWTVFETRMNELIPLALRLIEEGFALYGDQPPFDLSKDDFLQYSTDKGMRRFGTISNARGRPVAEIDVDYSPAQLEDTFADEDRRTLAAASA.

Residues Glu68, Glu101, and His104 each contribute to the Mn(2+) site. Positions 71 to 162 (VTEDIQPFMS…AAQVRASVTY (92 aa)) form a cross-link, 3-(O4'-tyrosyl)-valine (Val-Tyr). Glu101 serves as a coordination point for Fe cation. Residues Glu167, Glu202, and His205 each coordinate Fe cation.

This sequence belongs to the ribonucleoside diphosphate reductase small chain family. R2-like ligand binding oxidase subfamily. In terms of assembly, homodimer. Fe cation is required as a cofactor. The cofactor is Mn(2+).

In terms of biological role, probable oxidase that might be involved in lipid metabolism. This Mycobacterium tuberculosis (strain ATCC 25177 / H37Ra) protein is R2-like ligand binding oxidase.